The following is a 725-amino-acid chain: MASRTKGTTTIEVGADGVAVITLINPPVNSLSFDVLYSLKSNYEEALSRNDVKAIVVTGAKGKFSGGFDISGFGEIQKGTMKEPKVGYISIDILTDLLEAAKKPSVAAIDGLALGGGLELSMACHARISAPGAQLGLPELQLGVIPGFGGTQRLPRLVGLTKALEMILTSKPVKAEEGHSLGLIDAVVPPAELLNAARRWALDIAERRKPWVSSVLKTDKLPPLGEAREILKFAKDQTRRQAPNMKHPLMCLEAVEVGIVSGSRAGLEKEAQVGSEVINLDTTKGLIHVFFSQRGTTKVPGVTDRGLVPRKINKVAIIGGGLMGSGIATALILSNYSVILKEVNEKFLEAGIGRVKANLQSRVKKGKMSKEKFEKTMSLLKGSLDYESFRDVDMVIEAVIENISLKQQIFADLEKYCPQHCILASNTSTIDLNKIGERTKSQDRIIGAHFFSPAHVMPLLEIVRTNHTSAQVIVDLLDVGKKIRKTPVVVGNCTGFAVNRMFFPYTQAAMFLVEHGTDPYLIDKAVSKFGMPMGPFRLCDLVGFGVAIATATQFIENFPERTYKSMIIPLMQEDKRAGEATRKGFYLYDDRRKAKPDPEIKNYIDKARSVSGAKPDPKLEKLSEKEIIEMTFFPVVNEACRVFAEGIAVKAADLDIAGIFGMGFPPYRGGIMFWADSIGSKYIYSKLEEWSKAYGEFFKPCAFLAERGSKGAPLSAPLEQSRSRL.

The active-site Nucleophile is the Glu119. Glu139 functions as the Proton acceptor in the catalytic mechanism. The Microbody targeting signal signature appears at 723 to 725 (SRL).

This sequence in the N-terminal section; belongs to the enoyl-CoA hydratase/isomerase family. The protein in the central section; belongs to the 3-hydroxyacyl-CoA dehydrogenase family.

The protein localises to the glyoxysome. It carries out the reaction a (3S)-3-hydroxyacyl-CoA = a (2E)-enoyl-CoA + H2O. The catalysed reaction is a 4-saturated-(3S)-3-hydroxyacyl-CoA = a (3E)-enoyl-CoA + H2O. The enzyme catalyses a (3Z)-enoyl-CoA = a 4-saturated (2E)-enoyl-CoA. It catalyses the reaction a (3E)-enoyl-CoA = a 4-saturated (2E)-enoyl-CoA. It carries out the reaction (3S)-3-hydroxybutanoyl-CoA = (3R)-3-hydroxybutanoyl-CoA. The catalysed reaction is a (3S)-3-hydroxyacyl-CoA + NAD(+) = a 3-oxoacyl-CoA + NADH + H(+). Its pathway is lipid metabolism; fatty acid beta-oxidation. This Brassica napus (Rape) protein is Glyoxysomal fatty acid beta-oxidation multifunctional protein MFP-a.